The chain runs to 196 residues: Auxin-induced protein 22B (196 aa).

The short motif at 18–22 is the EAR-like (transcriptional repression) element; that stretch reads LRLGL. The interval 44–74 is disordered; that stretch reads RQVRETSQDSVSISKASHHQQHVETVSAPPP. The 88-residue stretch at 99–186 folds into the PB1 domain; it reads GIFVKVSMDG…SCKRLRIMKG (88 aa).

This sequence belongs to the Aux/IAA family. Homodimers and heterodimers.

It localises to the nucleus. In terms of biological role, aux/IAA proteins are short-lived transcriptional factors that function as repressors of early auxin response genes at low auxin concentrations. Repression is thought to result from the interaction with auxin response factors (ARFs), proteins that bind to the auxin-responsive promoter element (AuxRE). Formation of heterodimers with ARF proteins may alter their ability to modulate early auxin response genes expression. The chain is Auxin-induced protein 22B (AUX22B) from Vigna radiata var. radiata (Mung bean).